A 212-amino-acid chain; its full sequence is Methylthioribulose-1-phosphate dehydratase (212 aa).

Zn(2+) is bound by residues histidine 97 and histidine 99.

It belongs to the aldolase class II family. MtnB subfamily. As to quaternary structure, homotetramer. Requires Zn(2+) as cofactor.

The enzyme catalyses 5-(methylsulfanyl)-D-ribulose 1-phosphate = 5-methylsulfanyl-2,3-dioxopentyl phosphate + H2O. It functions in the pathway amino-acid biosynthesis; L-methionine biosynthesis via salvage pathway; L-methionine from S-methyl-5-thio-alpha-D-ribose 1-phosphate: step 2/6. Its function is as follows. Catalyzes the dehydration of methylthioribulose-1-phosphate (MTRu-1-P) into 2,3-diketo-5-methylthiopentyl-1-phosphate (DK-MTP-1-P). The polypeptide is Methylthioribulose-1-phosphate dehydratase (Bacillus cereus (strain ZK / E33L)).